Consider the following 228-residue polypeptide: Methylthioribulose-1-phosphate dehydratase (228 aa).

Cysteine 92 contacts substrate. Zn(2+) is bound by residues histidine 110 and histidine 112. Glutamate 135 functions as the Proton donor/acceptor in the catalytic mechanism. Histidine 192 is a binding site for Zn(2+).

This sequence belongs to the aldolase class II family. MtnB subfamily. Requires Zn(2+) as cofactor.

It is found in the cytoplasm. It localises to the nucleus. It catalyses the reaction 5-(methylsulfanyl)-D-ribulose 1-phosphate = 5-methylsulfanyl-2,3-dioxopentyl phosphate + H2O. It participates in amino-acid biosynthesis; L-methionine biosynthesis via salvage pathway; L-methionine from S-methyl-5-thio-alpha-D-ribose 1-phosphate: step 2/6. Catalyzes the dehydration of methylthioribulose-1-phosphate (MTRu-1-P) into 2,3-diketo-5-methylthiopentyl-1-phosphate (DK-MTP-1-P). The sequence is that of Methylthioribulose-1-phosphate dehydratase from Schizosaccharomyces pombe (strain 972 / ATCC 24843) (Fission yeast).